A 258-amino-acid chain; its full sequence is UPF0246 protein YaaA (258 aa).

This sequence belongs to the UPF0246 family.

This is UPF0246 protein YaaA from Escherichia coli O7:K1 (strain IAI39 / ExPEC).